A 362-amino-acid chain; its full sequence is Chorismate synthase (362 aa).

Residue arginine 47 participates in NADP(+) binding. Residues 124 to 126, glycine 286, 301 to 305, and arginine 327 each bind FMN; these read RSS and KPTAT.

This sequence belongs to the chorismate synthase family. As to quaternary structure, homotetramer. The cofactor is FMNH2.

The catalysed reaction is 5-O-(1-carboxyvinyl)-3-phosphoshikimate = chorismate + phosphate. Its pathway is metabolic intermediate biosynthesis; chorismate biosynthesis; chorismate from D-erythrose 4-phosphate and phosphoenolpyruvate: step 7/7. Its function is as follows. Catalyzes the anti-1,4-elimination of the C-3 phosphate and the C-6 proR hydrogen from 5-enolpyruvylshikimate-3-phosphate (EPSP) to yield chorismate, which is the branch point compound that serves as the starting substrate for the three terminal pathways of aromatic amino acid biosynthesis. This reaction introduces a second double bond into the aromatic ring system. The polypeptide is Chorismate synthase (Synechococcus sp. (strain ATCC 27144 / PCC 6301 / SAUG 1402/1) (Anacystis nidulans)).